A 123-amino-acid polypeptide reads, in one-letter code: Protein LLP homolog (123 aa).

Over residues 1-21 (MAKSLRSKWKRKMRAEKRKKN) the composition is skewed to basic residues. Disordered regions lie at residues 1–22 (MAKSLRSKWKRKMRAEKRKKNA) and 61–123 (DLDV…KLAW). Basic and acidic residues predominate over residues 70–89 (ESSKMDTELKRNKKNLRDQH). Over residues 100–123 (QQKKLKSQCGKKKGKSKQAKKLAW) the composition is skewed to basic residues.

Belongs to the learning-associated protein family.

It is found in the nucleus. The protein resides in the nucleolus. The protein localises to the chromosome. Its function is as follows. Regulates dendritic and spine growth and synaptic transmission. The polypeptide is Protein LLP homolog (llph) (Xenopus laevis (African clawed frog)).